The primary structure comprises 154 residues: Small ribosomal subunit protein uS15 (154 aa).

The tract at residues 1–23 (MNKKRDKGQSHSTRPARAGPPRW) is disordered.

This sequence belongs to the universal ribosomal protein uS15 family. Part of the 30S ribosomal subunit.

The polypeptide is Small ribosomal subunit protein uS15 (Staphylothermus marinus (strain ATCC 43588 / DSM 3639 / JCM 9404 / F1)).